The chain runs to 496 residues: Probable cytosol aminopeptidase (496 aa).

Mn(2+)-binding residues include lysine 262 and aspartate 267. Residue lysine 274 is part of the active site. Positions 285, 344, and 346 each coordinate Mn(2+). Residue arginine 348 is part of the active site.

The protein belongs to the peptidase M17 family. It depends on Mn(2+) as a cofactor.

It is found in the cytoplasm. The enzyme catalyses Release of an N-terminal amino acid, Xaa-|-Yaa-, in which Xaa is preferably Leu, but may be other amino acids including Pro although not Arg or Lys, and Yaa may be Pro. Amino acid amides and methyl esters are also readily hydrolyzed, but rates on arylamides are exceedingly low.. It catalyses the reaction Release of an N-terminal amino acid, preferentially leucine, but not glutamic or aspartic acids.. Its function is as follows. Presumably involved in the processing and regular turnover of intracellular proteins. Catalyzes the removal of unsubstituted N-terminal amino acids from various peptides. This chain is Probable cytosol aminopeptidase, found in Rhizobium etli (strain CIAT 652).